Here is a 286-residue protein sequence, read N- to C-terminus: Probable ketoamine kinase YniA (286 aa).

An ATP-binding site is contributed by 91–93; it reads DYL. Asp193 acts as the Proton acceptor in catalysis.

This sequence belongs to the fructosamine kinase family.

In terms of biological role, ketoamine kinase that phosphorylates ketoamines on the third carbon of the sugar moiety to generate ketoamine 3-phosphate. Its precise substrate are unknown: does not have ribulosamine and/or erythrulosamine 3-kinase activity in vitro. In Escherichia coli (strain K12), this protein is Probable ketoamine kinase YniA (yniA).